The chain runs to 196 residues: ATP-dependent Clp protease proteolytic subunit (196 aa).

The active-site Nucleophile is Ser101. The active site involves His126.

This sequence belongs to the peptidase S14 family. As to quaternary structure, component of the chloroplastic Clp protease core complex.

It localises to the plastid. The protein localises to the chloroplast stroma. The catalysed reaction is Hydrolysis of proteins to small peptides in the presence of ATP and magnesium. alpha-casein is the usual test substrate. In the absence of ATP, only oligopeptides shorter than five residues are hydrolyzed (such as succinyl-Leu-Tyr-|-NHMec, and Leu-Tyr-Leu-|-Tyr-Trp, in which cleavage of the -Tyr-|-Leu- and -Tyr-|-Trp bonds also occurs).. In terms of biological role, cleaves peptides in various proteins in a process that requires ATP hydrolysis. Has a chymotrypsin-like activity. Plays a major role in the degradation of misfolded proteins. This Helianthus annuus (Common sunflower) protein is ATP-dependent Clp protease proteolytic subunit.